Consider the following 140-residue polypeptide: Midkine (140 aa).

The first 20 residues, 1–20, serve as a signal peptide directing secretion; sequence MQHRSFFLLALVALLAVTTA. Cystine bridges form between C34/C58, C42/C67, C49/C71, C81/C113, and C91/C123.

Belongs to the pleiotrophin family. In terms of assembly, homodimer. Interacts with ALK. Interacts with LRP1; promotes neuronal survival. Interacts with LRP2. Interacts with NCAM1. Interacts (via C-terminal) with PTPRZ1 (via chondroitin sulfate chains); this interaction is inhibited by PTN; this interaction promotes neuronal migration. Interacts with NCL; this interaction promotes NCL clustering and lateral movements of this complex into lipid rafts leading to MDK internalization. Interacts with LRP6 and LRP8: this interaction is calcium dependent. Interacts with ITGA4. Interacts with ITGA6. Interacts with ITGB1. Interacts with ITGA4:ITGB1 complex; this interaction mediates MDK-induced osteoblast cells migration through PXN phosphorylation. Interacts with ITGA6:ITGB1 complex; this interaction mediates MDK-induced neurite outgrowth. Interacts with NOTCH2; this interactio mediates a nuclear accumulation of NOTCH2 and therefore activation of NOTCH2 signaling leading to interaction between HES1 and STAT3. Interacts with GPC2 (via heparan sulfate chain); this interaction is inhibited by heparin followed by chondroitin sulfate E; this interaction induces GPC2 clustering through heparan sulfate chain; this interaction induces neuronal cell adhesion and neurite outgrowth. Interacts with SDC3; this interaction induces SDC3 clustering; this interaction induces neuronal cell adhesion and neurite outgrowth. Interacts with SDC1. Interacts with CSPG5; this interaction promotes elongation of oligodendroglial precursor-like cells. In terms of tissue distribution, expressed at a low level in arteries, and at higher levels in newly formed neointima. In brain, expressed in the caudate nucleus and the brain stem.

The protein localises to the secreted. Its function is as follows. Developmentally regulated, secreted growth factor homologous to pleiotrophin (PTN), which has heparin binding activity. Binds anaplastic lymphoma kinase (ALK) which induces ALK activation and subsequent phosphorylation of the insulin receptor substrate (IRS1), followed by the activation of mitogen-activated protein kinase (MAPK) and PI3-kinase, and the induction of cell proliferation. Involved in neointima formation after arterial injury, possibly by mediating leukocyte recruitment. Also involved in early fetal adrenal gland development. In terms of biological role, secreted protein that functions as a cytokine and growth factor and mediates its signal through cell-surface proteoglycan and non-proteoglycan receptors. Binds cell-surface proteoglycan receptors via their chondroitin sulfate (CS) groups. Thereby regulates many processes like inflammatory response, cell proliferation, cell adhesion, cell growth, cell survival, tissue regeneration, cell differentiation and cell migration. Participates in inflammatory processes by exerting two different activities. Firstly, mediates neutrophils and macrophages recruitment to the sites of inflammation both by direct action by cooperating namely with ITGB2 via LRP1 and by inducing chemokine expression. This inflammation can be accompanied by epithelial cell survival and smooth muscle cell migration after renal and vessel damage, respectively. Secondly, suppresses the development of tolerogenic dendric cells thereby inhibiting the differentiation of regulatory T cells and also promote T cell expansion through NFAT signaling and Th1 cell differentiation. Promotes tissue regeneration after injury or trauma. After heart damage negatively regulates the recruitment of inflammatory cells and mediates cell survival through activation of anti-apoptotic signaling pathways via MAPKs and AKT pathways through the activation of angiogenesis. Also facilitates liver regeneration as well as bone repair by recruiting macrophage at trauma site and by promoting cartilage development by facilitating chondrocyte differentiation. Plays a role in brain by promoting neural precursor cells survival and growth through interaction with heparan sulfate proteoglycans. Binds PTPRZ1 and promotes neuronal migration and embryonic neurons survival. Binds SDC3 or GPC2 and mediates neurite outgrowth and cell adhesion. Binds chondroitin sulfate E and heparin leading to inhibition of neuronal cell adhesion induced by binding with GPC2. Binds CSPG5 and promotes elongation of oligodendroglial precursor-like cells. Also binds ITGA6:ITGB1 complex; this interaction mediates MDK-induced neurite outgrowth. Binds LRP1; promotes neuronal survival. Binds ITGA4:ITGB1 complex; this interaction mediates MDK-induced osteoblast cells migration through PXN phosphorylation. Binds anaplastic lymphoma kinase (ALK) which induces ALK activation and subsequent phosphorylation of the insulin receptor substrate (IRS1), followed by the activation of mitogen-activated protein kinase (MAPK) and PI3-kinase, and the induction of cell proliferation. Promotes epithelial to mesenchymal transition through interaction with NOTCH2. During arteriogenesis, plays a role in vascular endothelial cell proliferation by inducing VEGFA expression and release which in turn induces nitric oxide synthase expression. Moreover activates vasodilation through nitric oxide synthase activation. Negatively regulates bone formation in response to mechanical load by inhibiting Wnt/beta-catenin signaling in osteoblasts. In addition plays a role in hippocampal development, working memory, auditory response, early fetal adrenal gland development and the female reproductive system. In Rattus norvegicus (Rat), this protein is Midkine.